We begin with the raw amino-acid sequence, 409 residues long: MQTLDRPNAPTQQPYPEPVYPRRPTRTVAVADVLIGSQHPVVVQSMINEDTLDVDAAVAGIRRLHEAGSEIVRVTVPSMAHAKAMEAIREKLIQTYKPVPLVADVHHNGIKIALEVAKYVDKVRINPGLFVFEKPQPGRTEYTQAEFEAIRNKIRETFTPLVQTLKAQNKALRIGVNHGSLAERMLFTYGDTPEGMVESALEFAQICAEQDFHNVVLSFKASRPQVMLAAYRLAARRFDALGLNYPFHLGVTEAGDGEYGRIKSAVGIGTLLAEGIGDTIRVSLTEAPEKEIPVAYGILQALNLRKTMVEYVACPSCGRTLFNLEEVLQKVRAATQHLVGLDIAVMGCIVNGPGEMADADYGYVGKTPGVISLYRGKEEVKRVPESEGVQALIDLIKADGRWVDPPSSH.

Over residues 1 to 12 (MQTLDRPNAPTQ) the composition is skewed to polar residues. Residues 1-22 (MQTLDRPNAPTQQPYPEPVYPR) are disordered. Positions 314, 317, 348, and 355 each coordinate [4Fe-4S] cluster.

The protein belongs to the IspG family. [4Fe-4S] cluster is required as a cofactor.

It carries out the reaction (2E)-4-hydroxy-3-methylbut-2-enyl diphosphate + 2 oxidized [2Fe-2S]-[ferredoxin] + H2O = 2-C-methyl-D-erythritol 2,4-cyclic diphosphate + 2 reduced [2Fe-2S]-[ferredoxin] + H(+). It participates in isoprenoid biosynthesis; isopentenyl diphosphate biosynthesis via DXP pathway; isopentenyl diphosphate from 1-deoxy-D-xylulose 5-phosphate: step 5/6. In terms of biological role, converts 2C-methyl-D-erythritol 2,4-cyclodiphosphate (ME-2,4cPP) into 1-hydroxy-2-methyl-2-(E)-butenyl 4-diphosphate. The sequence is that of 4-hydroxy-3-methylbut-2-en-1-yl diphosphate synthase (ferredoxin) from Synechococcus sp. (strain JA-2-3B'a(2-13)) (Cyanobacteria bacterium Yellowstone B-Prime).